The chain runs to 508 residues: Photosystem II CP47 reaction center protein (508 aa).

The next 6 helical transmembrane spans lie at 21–36, 101–115, 140–156, 203–218, 237–252, and 457–472; these read SVHI…WAGS, IVFS…IWHW, GIHL…SGAF, IAAG…FHLS, VLSS…AFIV, and TFAL…HGAR.

This sequence belongs to the PsbB/PsbC family. PsbB subfamily. In terms of assembly, PSII is composed of 1 copy each of membrane proteins PsbA, PsbB, PsbC, PsbD, PsbE, PsbF, PsbH, PsbI, PsbJ, PsbK, PsbL, PsbM, PsbT, PsbX, PsbY, PsbZ, Psb30/Ycf12, at least 3 peripheral proteins of the oxygen-evolving complex and a large number of cofactors. It forms dimeric complexes. Requires Binds multiple chlorophylls. PSII binds additional chlorophylls, carotenoids and specific lipids. as cofactor.

Its subcellular location is the plastid. It localises to the chloroplast thylakoid membrane. One of the components of the core complex of photosystem II (PSII). It binds chlorophyll and helps catalyze the primary light-induced photochemical processes of PSII. PSII is a light-driven water:plastoquinone oxidoreductase, using light energy to abstract electrons from H(2)O, generating O(2) and a proton gradient subsequently used for ATP formation. In Cycas taitungensis (Prince sago), this protein is Photosystem II CP47 reaction center protein.